A 394-amino-acid chain; its full sequence is p-hydroxybenzoate hydroxylase (394 aa).

Residues S13, E32, R42–V47, and Q102 contribute to the FAD site. Substrate contacts are provided by residues Y201, S212–R214, and Y222. Residue D286 coordinates FAD. P293 contributes to the substrate binding site. L299–N300 is an FAD binding site.

Belongs to the aromatic-ring hydroxylase family. In terms of assembly, homodimer. Requires FAD as cofactor.

It carries out the reaction 4-hydroxybenzoate + NADPH + O2 + H(+) = 3,4-dihydroxybenzoate + NADP(+) + H2O. It functions in the pathway aromatic compound metabolism; benzoate degradation via hydroxylation; 3,4-dihydroxybenzoate from benzoate: step 2/2. In terms of biological role, catalyzes the incorporation of an atom of dioxygen into p-hydroxybenzoate (p-OHB) to form 3,4-dihydroxybenzoate (3,4DOHB). The reaction occurs in two parts: reduction of the flavin adenine dinucleotide (FAD) in the enzyme by reduced nicotinamide adenine dinucleotide phosphate (NADPH) in response to binding p-hydroxybenzoate to the enzyme and oxidation of reduced FAD with oxygen to form a hydroperoxide, which then oxygenates p-hydroxybenzoate. The chain is p-hydroxybenzoate hydroxylase from Pseudomonas aeruginosa (strain ATCC 15692 / DSM 22644 / CIP 104116 / JCM 14847 / LMG 12228 / 1C / PRS 101 / PAO1).